Consider the following 423-residue polypeptide: Deferrochelatase (423 aa).

Residues 1–35 (MQYKDENGVNEPSRRRLLKVIGALALAGSCPVAHA) constitute a signal peptide (tat-type signal). 236–238 (GTA) contacts heme b. Protoporphyrin IX contacts are provided by residues 236 to 238 (GTA) and R296. Heme b-binding positions include H329, 334–336 (NPR), and R347.

In terms of assembly, homodimer. Part of a ferrous iron transporter composed of EfeU, EfeO and EfeB. However, this EfeUOB tripartite iron transporter is defective in E.coli strain K12 due to a frameshift mutation in EfeU. The cofactor is heme b. Post-translationally, exported by the Tat system. The position of the signal peptide cleavage has been experimentally proven. Can also be exported by the Sec system.

It localises to the periplasm. It carries out the reaction heme b + 2 H(+) = protoporphyrin IX + Fe(2+). Involved in the recovery of exogenous heme iron. Extracts iron from heme while preserving the protoporphyrin ring intact. Also displays peroxidase activity on guaiacol in vitro. This Escherichia coli (strain K12) protein is Deferrochelatase (efeB).